Consider the following 1253-residue polypeptide: Cytoplasmic FMR1-interacting protein 1 (1253 aa).

At Ser583 the chain carries Phosphoserine. Positions 724-732 are EIF4E-binding; it reads DKRLRSECK. Thr1234 is modified (phosphothreonine).

This sequence belongs to the CYFIP family. As to quaternary structure, component of the WAVE1 complex composed of ABI2, CYFIP1 or CYFIP2, BRK1, NCKAP1 and WASF1/WAVE1. Within the complex, a heterodimer containing NCKAP1 and CYFIP1 interacts with a heterotrimer formed by WAVE1, ABI2 and BRK1. Component of the CYFIP1-EIF4E-FMR1 complex which is composed of CYFIP, EIF4E and FMR1. Interacts with FMR1 but does not bind to related proteins FXR1 or FXR2. Interaction with EIF4E stimulates FMR1 binding. Component of the WAVE2 complex composed of ABI1, CYFIP1/SRA1, NCKAP1/NAP1 (NCKAP1L/HEM1 in hematopoietic cells) and WASF2/WAVE2. Interacts with the active GTP-bound form of RAC1. Interacts through its C-terminus with the C-terminus of DPYSL2/CRMP2 which is necessary for DPYSL2-induced axon outgrowth. Interacts with NYAP1, NYAP2 and MYO16. Interacts with TMEM108 (via N-terminus); the interaction associates TMEM108 with the WAVE1 complex. As to expression, highly expressed in embryonic and adult developing nervous system.

Its subcellular location is the cytoplasm. It localises to the perinuclear region. It is found in the cell projection. The protein resides in the lamellipodium. The protein localises to the ruffle. Its subcellular location is the synapse. It localises to the synaptosome. In terms of biological role, component of the CYFIP1-EIF4E-FMR1 complex which binds to the mRNA cap and mediates translational repression. In the CYFIP1-EIF4E-FMR1 complex this subunit is an adapter between EIF4E and FMR1. Promotes the translation repression activity of FMR1 in brain probably by mediating its association with EIF4E and mRNA. Regulates formation of membrane ruffles and lamellipodia. Plays a role in axon outgrowth. Binds to F-actin but not to RNA. Part of the WAVE complex that regulates actin filament reorganization via its interaction with the Arp2/3 complex. Actin remodeling activity is regulated by RAC1. Regulator of epithelial morphogenesis. May act as an invasion suppressor in cancers. As component of the WAVE1 complex, required for BDNF-NTRK2 endocytic trafficking and signaling from early endosomes. This chain is Cytoplasmic FMR1-interacting protein 1, found in Mus musculus (Mouse).